A 272-amino-acid chain; its full sequence is Short-chain dehydrogenase srdC (272 aa).

Ile15, Asp65, Arg127, Tyr173, Lys177, Val206, and Thr208 together coordinate NADP(+). Tyr173 serves as the catalytic Proton donor. The active-site Lowers pKa of active site Tyr is the Lys177.

This sequence belongs to the short-chain dehydrogenases/reductases (SDR) family.

Its function is as follows. Short-chain dehydrogenase; part of the gene cluster that mediates the biosynthesis of sordarial, a salicylic aldehyde structurally related to the phytotoxin pyriculol. The most interesting aspect of this pathway is formation of an aromatic product from the highly reducing polyketide synthase srdA. SrdA synthesizes a reduced polyketide chain from one molecule of acetyl-CoA and five molecules of malonyl-CoA. The polyketide chain is then reductively released as an aldehyde. The oxidoreductases srdC, srdD and srdE then oxidize one of the hydroxy groups to facilitate the intramolecular aldol condensation, followed by dehydration to yield a salicylic aldehyde. This aldehyde can undergo facile reduction by endogenous reductases to yield the alcohol 1-hydroxy-2-hydroxymethyl-3-pent-1,3-dienylbenzene. The flavin-dependent srdI counteract against the propensity of the aldehydes to be reduced under physiological conditions and is responsible for reoxidizing 1-hydroxy-2-hydroxymethyl-3-pent-1,3-dienylbenzene back to the salicylic aldehyde. This salicylic aldehyde is then selectively epoxidized by the cupin-domain-containing oxidoreductase srdB to yield the epoxide, which can be hydrolyzed stereoselectively by the hydrolase srdG to give the final product sordarial. This Neurospora crassa (strain ATCC 24698 / 74-OR23-1A / CBS 708.71 / DSM 1257 / FGSC 987) protein is Short-chain dehydrogenase srdC.